Here is a 257-residue protein sequence, read N- to C-terminus: Thiazole synthase (257 aa).

Lys-96 (schiff-base intermediate with DXP) is an active-site residue. 1-deoxy-D-xylulose 5-phosphate is bound by residues Gly-157, 184-185 (AG), and 206-207 (NT).

Belongs to the ThiG family. As to quaternary structure, homotetramer. Forms heterodimers with either ThiH or ThiS.

It localises to the cytoplasm. It carries out the reaction [ThiS sulfur-carrier protein]-C-terminal-Gly-aminoethanethioate + 2-iminoacetate + 1-deoxy-D-xylulose 5-phosphate = [ThiS sulfur-carrier protein]-C-terminal Gly-Gly + 2-[(2R,5Z)-2-carboxy-4-methylthiazol-5(2H)-ylidene]ethyl phosphate + 2 H2O + H(+). It participates in cofactor biosynthesis; thiamine diphosphate biosynthesis. Functionally, catalyzes the rearrangement of 1-deoxy-D-xylulose 5-phosphate (DXP) to produce the thiazole phosphate moiety of thiamine. Sulfur is provided by the thiocarboxylate moiety of the carrier protein ThiS. In vitro, sulfur can be provided by H(2)S. The polypeptide is Thiazole synthase (Agrobacterium fabrum (strain C58 / ATCC 33970) (Agrobacterium tumefaciens (strain C58))).